A 574-amino-acid chain; its full sequence is MPRGLELLIAQTILQGFDAQYGRFLEVTSGAQQRFEQADWHAVQLAMKNRIHLYDHHVGLVVEQLRCITNGQSTDAAFLLRVKEHYTRLLPDYPRFEIAESFFNSVYCRLFDHRSLTPERLFIFSSQPERRFRTIPRPLAKDFHPDHGWESLLMRVISDLPLRLRWQNKSRDIHYIIRHLTETLGTDNLAESHLQVANELFYRNKAAWLVGKLITPSGTLPFLLPIHQTDDGELFIDTCLTTTAEASIVFGFARSYFMVYAALVEWLREILPGKTTAELYMAIGCQKHAKTESYREYLVYLQGCNEQFIEAPGIRGMVMLVFTLPGFDRVFKVIKDKFAPQKEMSAAHVRACYQLVKEHDRVGRMADTQEFENFVLEKRHISPALMELLLQEAAEKITDLGEQIVIRHLYIERRMVPLNIWLEQVEGQQLRDAIEEYGNAIRQLAAANIFPGDMLFKNFGVTRHGRVVFYDYDEICYMTEVNFRDIPPPRYPEDELASEPWYSVSPGDVFPEEFRHWLCADPRIGPLFEEMHADLFRADYWRALQNRIREGHVEDVYAYRRRQRFSVRYGEMLF.

Residues Ala311–Met317 and Lys332 each bind ATP. Asp367 is a catalytic residue.

Belongs to the AceK family.

The protein resides in the cytoplasm. The enzyme catalyses L-seryl-[isocitrate dehydrogenase] + ATP = O-phospho-L-seryl-[isocitrate dehydrogenase] + ADP + H(+). In terms of biological role, bifunctional enzyme which can phosphorylate or dephosphorylate isocitrate dehydrogenase (IDH) on a specific serine residue. This is a regulatory mechanism which enables bacteria to bypass the Krebs cycle via the glyoxylate shunt in response to the source of carbon. When bacteria are grown on glucose, IDH is fully active and unphosphorylated, but when grown on acetate or ethanol, the activity of IDH declines drastically concomitant with its phosphorylation. The polypeptide is Isocitrate dehydrogenase kinase/phosphatase (Shigella boydii serotype 4 (strain Sb227)).